Here is a 219-residue protein sequence, read N- to C-terminus: RING-H2 finger protein ATL78 (219 aa).

A helical membrane pass occupies residues 57–77; it reads VMVLSVLLCALVCSLGLNSII. The segment at 131-173 adopts an RING-type; atypical zinc-finger fold; the sequence is CAICLSEFVAEERVKLLPTCHHGFHVRCIDKWLSSHSSCPTCR.

Belongs to the RING-type zinc finger family. ATL subfamily.

The protein resides in the membrane. The enzyme catalyses S-ubiquitinyl-[E2 ubiquitin-conjugating enzyme]-L-cysteine + [acceptor protein]-L-lysine = [E2 ubiquitin-conjugating enzyme]-L-cysteine + N(6)-ubiquitinyl-[acceptor protein]-L-lysine.. It functions in the pathway protein modification; protein ubiquitination. The sequence is that of RING-H2 finger protein ATL78 (ATL78) from Arabidopsis thaliana (Mouse-ear cress).